A 122-amino-acid chain; its full sequence is Large ribosomal subunit protein uL14 (122 aa).

Belongs to the universal ribosomal protein uL14 family. Part of the 50S ribosomal subunit. Forms a cluster with proteins L3 and L19. In the 70S ribosome, L14 and L19 interact and together make contacts with the 16S rRNA in bridges B5 and B8.

In terms of biological role, binds to 23S rRNA. Forms part of two intersubunit bridges in the 70S ribosome. The polypeptide is Large ribosomal subunit protein uL14 (Laribacter hongkongensis (strain HLHK9)).